The sequence spans 565 residues: Sulfite reductase [NADPH] hemoprotein beta-component (565 aa).

Residues cysteine 429, cysteine 435, cysteine 474, and cysteine 478 each contribute to the [4Fe-4S] cluster site. Cysteine 478 lines the siroheme pocket.

This sequence belongs to the nitrite and sulfite reductase 4Fe-4S domain family. In terms of assembly, alpha(8)-beta(8). The alpha component is a flavoprotein, the beta component is a hemoprotein. Siroheme serves as cofactor. The cofactor is [4Fe-4S] cluster.

The enzyme catalyses hydrogen sulfide + 3 NADP(+) + 3 H2O = sulfite + 3 NADPH + 4 H(+). It participates in sulfur metabolism; hydrogen sulfide biosynthesis; hydrogen sulfide from sulfite (NADPH route): step 1/1. Component of the sulfite reductase complex that catalyzes the 6-electron reduction of sulfite to sulfide. This is one of several activities required for the biosynthesis of L-cysteine from sulfate. The protein is Sulfite reductase [NADPH] hemoprotein beta-component of Shewanella sp. (strain MR-7).